A 326-amino-acid polypeptide reads, in one-letter code: Cobalamin biosynthesis protein CobD (326 aa).

The next 4 membrane-spanning stretches (helical) occupy residues 58–78, 81–101, 157–177, and 304–324; these read MRGVATILILLAASILLGVVL, LFDVLGAVGFILEAITVAVFL, FSDGVVAPALWYAVAGLPGLL, and VFYRACTTLAAASAVLVLPFL.

This sequence belongs to the CobD/CbiB family.

Its subcellular location is the cell membrane. It participates in cofactor biosynthesis; adenosylcobalamin biosynthesis. In terms of biological role, converts cobyric acid to cobinamide by the addition of aminopropanol on the F carboxylic group. This is Cobalamin biosynthesis protein CobD from Sinorhizobium fredii (strain NBRC 101917 / NGR234).